The chain runs to 314 residues: MRLLAGAGLCLALAALALLAVALSTDHWYETDARRHRDRCRKPGGKRNDPGYMYTPGQHLPLRGEPPSSRIRSPRGGEPGGVRMISRAEDLGVRGLRERPTGARDLPLSRPYLATDPHCSRRFNSTVSGLWRKCHRDGFDKDTEELILKGIVERCTSVRYYYTSSSLPPNLSVNVTKTIRQDEWHALHLRRMTAGFIGMAVSIILFGWMVGVLGCCKQHDLMQYVAGLLFLMGGTCCIISLCTCVAGINFELSRYPRSIYSLPEEISHGYGWSMFCAWGGLGLTLLSGFLCTLAPSLSASQSAVHKPRQENGAV.

Positions 1-24 (MRLLAGAGLCLALAALALLAVALS) are cleaved as a signal peptide. A disordered region spans residues 32–83 (DARRHRDRCRKPGGKRNDPGYMYTPGQHLPLRGEPPSSRIRSPRGGEPGGVR). The span at 36–45 (HRDRCRKPGG) shows a compositional bias: basic residues. 3 helical membrane passes run 194-214 (AGFI…GVLG), 228-248 (LLFL…VAGI), and 274-294 (MFCA…CTLA).

The protein belongs to the TMEM178 family.

It is found in the membrane. The sequence is that of Transmembrane protein 178B (tmem178b) from Xenopus tropicalis (Western clawed frog).